A 254-amino-acid chain; its full sequence is Probable electron transfer flavoprotein subunit beta (254 aa).

It belongs to the ETF beta-subunit/FixA family. As to quaternary structure, heterodimer of an alpha and a beta subunit. It depends on FAD as a cofactor. AMP serves as cofactor.

The protein localises to the mitochondrion matrix. In terms of biological role, the electron transfer flavoprotein serves as a specific electron acceptor for several dehydrogenases, including five acyl-CoA dehydrogenases, glutaryl-CoA and sarcosine dehydrogenase. It transfers the electrons to the main mitochondrial respiratory chain via ETF-ubiquinone oxidoreductase (ETF dehydrogenase). This chain is Probable electron transfer flavoprotein subunit beta, found in Schizosaccharomyces pombe (strain 972 / ATCC 24843) (Fission yeast).